Here is a 406-residue protein sequence, read N- to C-terminus: Kelch domain-containing protein 2 (406 aa).

6 Kelch repeats span residues 31–85 (ERSG…NTEG), 92–136 (SGSC…ERID), 148–207 (LGVW…IWSQ), 221–259 (HACATVGNKGFVFGGRYRDARMNDLHYLNLDTWEWNELI), 271–311 (HSLT…IKFN), and 322–359 (HTACASDEGEVIVFGGCANNLLVHHRAAHSNEILIFSV).

Component of a CRL2(KLHDC2) E3 ubiquitin-protein ligase complex, also named ECS(KLHDC2) complex, composed of CUL2, Elongin BC (ELOB and ELOC), RBX1 and substrate-specific adapter KLHDC2. May form oligomers as a KLHDC2-ELOB-ELOC complex; this interaction is autoinhibitory for the E3 ligase complex as the substrate-binding site of KLHDC2 is blocked in the oligomer. Interacts with CREB3; interaction is direct and specific as it does not interact with CREB1, ATF4, ATF6, JUN, FOS, CEBPA or herpes simplex virus transactivator VP16. Post-translationally, autoubiquitinated by the CRL2(KLHDC2) E3 ligase complex.

Its subcellular location is the nucleus. Its pathway is protein modification; protein ubiquitination. Its function is as follows. Substrate-recognition component of a Cul2-RING (CRL2) E3 ubiquitin-protein ligase complex of the DesCEND (destruction via C-end degrons) pathway, which recognizes a C-degron located at the extreme C terminus of target proteins, leading to their ubiquitination and degradation. The C-degron recognized by the DesCEND pathway is usually a motif of less than ten residues and can be present in full-length proteins, truncated proteins or proteolytically cleaved forms. The CRL2(KLHDC2) complex specifically recognizes proteins with a diglycine (Gly-Gly) at the C-terminus, leading to their ubiquitination and degradation. The CRL2(KLHDC2) complex mediates ubiquitination and degradation of truncated SELENOK and SELENOS selenoproteins produced by failed UGA/Sec decoding, which end with a diglycine. The CRL2(KLHDC2) complex also recognizes proteolytically cleaved proteins ending with Gly-Gly, such as the N-terminal fragment of USP1, leading to their degradation. May also act as an indirect repressor of CREB3-mediated transcription by interfering with CREB3-DNA-binding. This Bos taurus (Bovine) protein is Kelch domain-containing protein 2.